We begin with the raw amino-acid sequence, 571 residues long: Glutamate--tRNA ligase (571 aa).

The short motif at P110 to S120 is the 'HIGH' region element.

It belongs to the class-I aminoacyl-tRNA synthetase family. Glutamate--tRNA ligase type 2 subfamily.

The protein localises to the cytoplasm. It carries out the reaction tRNA(Glu) + L-glutamate + ATP = L-glutamyl-tRNA(Glu) + AMP + diphosphate. Catalyzes the attachment of glutamate to tRNA(Glu) in a two-step reaction: glutamate is first activated by ATP to form Glu-AMP and then transferred to the acceptor end of tRNA(Glu). The chain is Glutamate--tRNA ligase from Methanosarcina barkeri (strain Fusaro / DSM 804).